We begin with the raw amino-acid sequence, 184 residues long: ATP synthase subunit b, chloroplastic (184 aa).

A helical transmembrane segment spans residues 27–49; it reads LATNPINLSVVLGVLIFFGKGVL.

Belongs to the ATPase B chain family. In terms of assembly, F-type ATPases have 2 components, F(1) - the catalytic core - and F(0) - the membrane proton channel. F(1) has five subunits: alpha(3), beta(3), gamma(1), delta(1), epsilon(1). F(0) has four main subunits: a(1), b(1), b'(1) and c(10-14). The alpha and beta chains form an alternating ring which encloses part of the gamma chain. F(1) is attached to F(0) by a central stalk formed by the gamma and epsilon chains, while a peripheral stalk is formed by the delta, b and b' chains.

The protein resides in the plastid. The protein localises to the chloroplast thylakoid membrane. Functionally, f(1)F(0) ATP synthase produces ATP from ADP in the presence of a proton or sodium gradient. F-type ATPases consist of two structural domains, F(1) containing the extramembraneous catalytic core and F(0) containing the membrane proton channel, linked together by a central stalk and a peripheral stalk. During catalysis, ATP synthesis in the catalytic domain of F(1) is coupled via a rotary mechanism of the central stalk subunits to proton translocation. In terms of biological role, component of the F(0) channel, it forms part of the peripheral stalk, linking F(1) to F(0). The sequence is that of ATP synthase subunit b, chloroplastic from Platanus occidentalis (Sycamore).